A 352-amino-acid chain; its full sequence is Threonine synthase (352 aa).

Position 59 is an N6-(pyridoxal phosphate)lysine (Lys59). Pyridoxal 5'-phosphate is bound by residues Asn85, 185 to 189, and Thr314; that span reads GNAGN.

The protein belongs to the threonine synthase family. The cofactor is pyridoxal 5'-phosphate.

It carries out the reaction O-phospho-L-homoserine + H2O = L-threonine + phosphate. It participates in amino-acid biosynthesis; L-threonine biosynthesis; L-threonine from L-aspartate: step 5/5. In terms of biological role, catalyzes the gamma-elimination of phosphate from L-phosphohomoserine and the beta-addition of water to produce L-threonine. The protein is Threonine synthase (thrC) of Bacillus sp. (strain ULM1).